Reading from the N-terminus, the 107-residue chain is Nucleoid-associated protein Mlg_1509 (107 aa).

Belongs to the YbaB/EbfC family. As to quaternary structure, homodimer.

Its subcellular location is the cytoplasm. It localises to the nucleoid. Binds to DNA and alters its conformation. May be involved in regulation of gene expression, nucleoid organization and DNA protection. This chain is Nucleoid-associated protein Mlg_1509, found in Alkalilimnicola ehrlichii (strain ATCC BAA-1101 / DSM 17681 / MLHE-1).